Reading from the N-terminus, the 148-residue chain is Oleosin 1 (148 aa).

Position 2 is an N-acetylalanine (A2). The polar stretch occupies residues A2 to K28. The hydrophobic stretch occupies residues A29–S148. Helical transmembrane passes span G37–A57 and G81–K101.

The protein belongs to the oleosin family.

The protein resides in the lipid droplet. The protein localises to the membrane. Its function is as follows. May have a structural role to stabilize the lipid body during desiccation of the seed by preventing coalescence of the oil. Probably interacts with both lipid and phospholipid moieties of lipid bodies. May also provide recognition signals for specific lipase anchorage in lipolysis during seedling growth. This is Oleosin 1 (OLE1) from Prunus dulcis (Almond).